Reading from the N-terminus, the 756-residue chain is Sodium/hydrogen exchanger 8 (756 aa).

Topologically, residues 1 to 31 (MTSIIGAALPYKSPEKAIASSSYSAENDSSP) are extracellular. An N-linked (GlcNAc...) asparagine glycan is attached at asparagine 27. Residues 32–52 (VDAVIFAGTSLVLGTACRYLF) traverse the membrane as a helical segment. The Cytoplasmic segment spans residues 53 to 56 (NGTR). The helical transmembrane segment at 57–77 (VPYTVVLLVIGIFLGSLEYGT) threads the bilayer. The Extracellular segment spans residues 78–89 (KHNLGKLGHGIR). Residues 90 to 110 (IWNGINPDLLLAVFLPVLLFE) traverse the membrane as a helical segment. At 111–125 (SSFSMDVHQIKRCMG) the chain is on the cytoplasmic side. The helical transmembrane segment at 126-146 (QMVLLAGPGVLISTFCLGALI) threads the bilayer. Residues 147-157 (KLTFPYNWDWK) lie on the Extracellular side of the membrane. A helical transmembrane segment spans residues 158–178 (TSLLLGGLLGATDPVAVVALL). Residues 179–194 (KELGASKKMTTLIDGE) lie on the Cytoplasmic side of the membrane. A helical membrane pass occupies residues 195-215 (SLMNDGVSVVVFQLFFKMVMG). Residues 216 to 225 (HNSDWGSIIK) are Extracellular-facing. The helical transmembrane segment at 226–248 (FLVQNSFGAVGIGLAFGIASVFW) threads the bilayer. Topologically, residues 249-251 (LKF) are cytoplasmic. Residues 252 to 271 (IFNDTVAQITVTLSASYFAY) traverse the membrane as a helical segment. Over 272 to 276 (YTAQE) the chain is Extracellular. Residues 277-297 (WAGVSGILTVMILGMFFAAFA) traverse the membrane as a helical segment. The Cytoplasmic segment spans residues 298 to 311 (RTAFKGDSHQSLHH). Residues 312-332 (FWEMAAYIANTLVFMLSGVII) traverse the membrane as a helical segment. Residues 333–350 (AESVLSGQTISYKGNSWS) are Extracellular-facing. Residues 351–371 (FLFLLYLYVQLSRCVVVGVLY) form a helical membrane-spanning segment. The Cytoplasmic portion of the chain corresponds to 372 to 385 (PLLCRSGYGLDWKE). The helical transmembrane segment at 386–406 (SIILTWSGLRGAVSLSLALSV) threads the bilayer. Topologically, residues 407–422 (KQSSGNSYLSSDTGTR) are extracellular. A helical membrane pass occupies residues 423–443 (FLFLTGGIVFLTLVVNGSTTQ). Topologically, residues 444–756 (LLLHLLRMDT…RSLAIGETDA (313 aa)) are cytoplasmic.

The protein belongs to the monovalent cation:proton antiporter 1 (CPA1) transporter (TC 2.A.36) family.

The protein resides in the cell membrane. It carries out the reaction Na(+)(in) + H(+)(out) = Na(+)(out) + H(+)(in). The catalysed reaction is K(+)(in) + H(+)(out) = K(+)(out) + H(+)(in). Its function is as follows. May act in low affinity electroneutral exchange of protons for cations such as Na(+) or K(+) across membranes. May also exchange Li(+) and Cs(+) with a lower affinity. The protein is Sodium/hydrogen exchanger 8 (NHX8) of Arabidopsis thaliana (Mouse-ear cress).